We begin with the raw amino-acid sequence, 205 residues long: Regulator of G-protein signaling 4 (205 aa).

S-palmitoyl cysteine attachment occurs at residues Cys-2, Cys-12, and Cys-95. An RGS domain is found at Ser-62 to Thr-178.

Either Cys-2 or Cys-12 or both are palmitoylated. Post-translationally, phosphorylated by cyclic GMP-dependent protein kinase.

In terms of biological role, inhibits signal transduction by increasing the GTPase activity of G protein alpha subunits thereby driving them into their inactive GDP-bound form. Activity on G(z)-alpha is inhibited by phosphorylation of the G-protein. Activity on G(z)-alpha and G(i)-alpha-1 is inhibited by palmitoylation of the G-protein. This Rattus norvegicus (Rat) protein is Regulator of G-protein signaling 4 (Rgs4).